We begin with the raw amino-acid sequence, 939 residues long: Valine--tRNA ligase (939 aa).

The short motif at 47–57 (PNVTGILHMGH) is the 'HIGH' region element. The short motif at 563–567 (KLSKS) is the 'KMSKS' region element. Lysine 566 is an ATP binding site. Residues 873–939 (AEHLAKEHAR…QSILDKIASL (67 aa)) adopt a coiled-coil conformation.

It belongs to the class-I aminoacyl-tRNA synthetase family. ValS type 1 subfamily. As to quaternary structure, monomer.

Its subcellular location is the cytoplasm. It carries out the reaction tRNA(Val) + L-valine + ATP = L-valyl-tRNA(Val) + AMP + diphosphate. In terms of biological role, catalyzes the attachment of valine to tRNA(Val). As ValRS can inadvertently accommodate and process structurally similar amino acids such as threonine, to avoid such errors, it has a 'posttransfer' editing activity that hydrolyzes mischarged Thr-tRNA(Val) in a tRNA-dependent manner. The polypeptide is Valine--tRNA ligase (Chlamydia muridarum (strain MoPn / Nigg)).